The sequence spans 182 residues: Large ribosomal subunit protein uL5 (182 aa).

It belongs to the universal ribosomal protein uL5 family. Part of the 50S ribosomal subunit; part of the 5S rRNA/L5/L18/L25 subcomplex. Contacts the 5S rRNA and the P site tRNA. Forms a bridge to the 30S subunit in the 70S ribosome.

Functionally, this is one of the proteins that bind and probably mediate the attachment of the 5S RNA into the large ribosomal subunit, where it forms part of the central protuberance. In the 70S ribosome it contacts protein S13 of the 30S subunit (bridge B1b), connecting the 2 subunits; this bridge is implicated in subunit movement. Contacts the P site tRNA; the 5S rRNA and some of its associated proteins might help stabilize positioning of ribosome-bound tRNAs. In Trichormus variabilis (strain ATCC 29413 / PCC 7937) (Anabaena variabilis), this protein is Large ribosomal subunit protein uL5.